The following is a 117-amino-acid chain: Large ribosomal subunit protein uL18 (117 aa).

This sequence belongs to the universal ribosomal protein uL18 family. As to quaternary structure, part of the 50S ribosomal subunit; part of the 5S rRNA/L5/L18/L25 subcomplex. Contacts the 5S and 23S rRNAs.

Functionally, this is one of the proteins that bind and probably mediate the attachment of the 5S RNA into the large ribosomal subunit, where it forms part of the central protuberance. The protein is Large ribosomal subunit protein uL18 of Blochmanniella floridana.